A 339-amino-acid polypeptide reads, in one-letter code: Glutamyl-tRNA reductase (339 aa).

Substrate is bound by residues 50-53 (TCHR), Ser-102, 107-109 (ETE), and Gln-113. Residue Cys-51 is the Nucleophile of the active site. 181–186 (GYSDIN) is an NADP(+) binding site.

It belongs to the glutamyl-tRNA reductase family. In terms of assembly, homodimer.

It carries out the reaction (S)-4-amino-5-oxopentanoate + tRNA(Glu) + NADP(+) = L-glutamyl-tRNA(Glu) + NADPH + H(+). The protein operates within porphyrin-containing compound metabolism; protoporphyrin-IX biosynthesis; 5-aminolevulinate from L-glutamyl-tRNA(Glu): step 1/2. Catalyzes the NADPH-dependent reduction of glutamyl-tRNA(Glu) to glutamate 1-semialdehyde (GSA). This chain is Glutamyl-tRNA reductase, found in Chlamydia pneumoniae (Chlamydophila pneumoniae).